A 279-amino-acid polypeptide reads, in one-letter code: NH(3)-dependent NAD(+) synthetase (279 aa).

39–46 (GLSGGIDS) is an ATP binding site. A Mg(2+)-binding site is contributed by D45. R122 serves as a coordination point for deamido-NAD(+). ATP is bound at residue T142. Residue E147 coordinates Mg(2+). Deamido-NAD(+) contacts are provided by K155 and D162. ATP contacts are provided by K171 and S193. Residue 253–254 (HK) participates in deamido-NAD(+) binding.

Belongs to the NAD synthetase family. Homodimer.

The enzyme catalyses deamido-NAD(+) + NH4(+) + ATP = AMP + diphosphate + NAD(+) + H(+). The protein operates within cofactor biosynthesis; NAD(+) biosynthesis; NAD(+) from deamido-NAD(+) (ammonia route): step 1/1. Catalyzes the ATP-dependent amidation of deamido-NAD to form NAD. Uses ammonia as a nitrogen source. In Sulfolobus acidocaldarius (strain ATCC 33909 / DSM 639 / JCM 8929 / NBRC 15157 / NCIMB 11770), this protein is NH(3)-dependent NAD(+) synthetase.